Here is a 510-residue protein sequence, read N- to C-terminus: GMP synthase [glutamine-hydrolyzing] (510 aa).

The Glutamine amidotransferase type-1 domain occupies 5–195 (KILVLDFGGQ…LFKVCGVKGT (191 aa)). C82 (nucleophile) is an active-site residue. Active-site residues include H169 and E171. The region spanning 196-385 (WNMADFINEE…LGLPDEIVWR (190 aa)) is the GMPS ATP-PPase domain. 223 to 229 (SGGVDSA) serves as a coordination point for ATP.

In terms of assembly, homodimer.

The catalysed reaction is XMP + L-glutamine + ATP + H2O = GMP + L-glutamate + AMP + diphosphate + 2 H(+). It participates in purine metabolism; GMP biosynthesis; GMP from XMP (L-Gln route): step 1/1. Its function is as follows. Catalyzes the synthesis of GMP from XMP. In Halothermothrix orenii (strain H 168 / OCM 544 / DSM 9562), this protein is GMP synthase [glutamine-hydrolyzing].